Here is a 352-residue protein sequence, read N- to C-terminus: S-adenosylmethionine:tRNA ribosyltransferase-isomerase (352 aa).

This sequence belongs to the QueA family. In terms of assembly, monomer.

Its subcellular location is the cytoplasm. The enzyme catalyses 7-aminomethyl-7-carbaguanosine(34) in tRNA + S-adenosyl-L-methionine = epoxyqueuosine(34) in tRNA + adenine + L-methionine + 2 H(+). It participates in tRNA modification; tRNA-queuosine biosynthesis. Functionally, transfers and isomerizes the ribose moiety from AdoMet to the 7-aminomethyl group of 7-deazaguanine (preQ1-tRNA) to give epoxyqueuosine (oQ-tRNA). In Paraburkholderia phytofirmans (strain DSM 17436 / LMG 22146 / PsJN) (Burkholderia phytofirmans), this protein is S-adenosylmethionine:tRNA ribosyltransferase-isomerase.